Consider the following 1806-residue polypeptide: Atrochrysone carboxylic acid synthase (1806 aa).

Residues 30-283 (DLQGLFRRLY…SLPVYSGLCH (254 aa)) are N-terminal acylcarrier protein transacylase domain (SAT). A Ketosynthase family 3 (KS3) domain is found at 416–850 (QSKIAIIGMS…GGNTTVCLEE (435 aa)). Active-site for beta-ketoacyl synthase activity residues include Cys-589, His-725, and His-768. A malonyl-CoA:ACP transacylase (MAT) domain region spans residues 951 to 1270 (FAFTGQGASY…SLTALHCAGV (320 aa)). A product template (PT) domain region spans residues 1340–1659 (TSTVQQIIEE…RILLNRFFTA (320 aa)). The N-terminal hotdog fold stretch occupies residues 1344–1479 (QQIIEESFNG…ASILYDDAAL (136 aa)). Residues 1344–1654 (QQIIEESFNG…FRRYPRILLN (311 aa)) form the PKS/mFAS DH domain. The active-site Proton acceptor; for dehydratase activity is His-1376. A C-terminal hotdog fold region spans residues 1506 to 1654 (IANRFTRNMA…FRRYPRILLN (149 aa)). The active-site Proton donor; for dehydratase activity is Asp-1565. The disordered stretch occupies residues 1668 to 1726 (HAAASSTPAPRTKPEPVPVATPATAAAPVAQSPAAPASVTPAPAPAPAPGPTPAAAPAA). Positions 1685 to 1708 (PVATPATAAAPVAQSPAAPASVTP) are enriched in low complexity. Residues 1709–1721 (APAPAPAPGPTPA) are compositionally biased toward pro residues. One can recognise a Carrier domain in the interval 1728-1805 (GESDSVAAKA…DLRSWLLEYY (78 aa)). Ser-1765 carries the O-(pantetheine 4'-phosphoryl)serine modification.

It catalyses the reaction holo-[ACP] + 8 malonyl-CoA + 8 H(+) = atrochrysone carboxyl-[ACP] + 8 CO2 + 8 CoA + 2 H2O. Its pathway is secondary metabolite biosynthesis. Its function is as follows. Atrochrysone carboxylic acid synthase; part of the gene cluster that mediates the biosynthesis of monodictyphenone, a prenyl xanthone derivative. The pathway begins with the synthesis of atrochrysone thioester by the polyketide synthase (PKS) mdpG. The atrochrysone carboxyl ACP thioesterase mdpF then breaks the thioester bond and releases the atrochrysone carboxylic acid from mdpG. The atrochrysone carboxylic acid is then converted to atrochrysone which is further transformed into emodin anthrone. The next step is performed by the anthrone oxygenase mdpH that catalyzes the oxidation of emodinanthrone to emodin. Emodin is further modified to yield monodictyphenone via several steps involving mdpB, mdpC mdpJ, mdpK and mdpL. The short chain dehydrogenase mdpC converts the tautomers of emodin hydroquinone into the 3-hydroxy-3,4-dihydroan-thracen-1(2H)-one derivative. These enzymes with xptA, xptB and xptC are also proposed to be involved in the synthesis of shamixanthone from emodin. Especially, direct reduction of emodin by the short chain dehydrogenase mdpC followed by dehydration catalyzed by the scytalone dehydratase-like protein mdpB gives loss of oxygen and formation of chrysophanol intermediate in two simple steps. This chain is Atrochrysone carboxylic acid synthase, found in Emericella nidulans (strain FGSC A4 / ATCC 38163 / CBS 112.46 / NRRL 194 / M139) (Aspergillus nidulans).